The following is a 280-amino-acid chain: Phosphatidylglycerol--prolipoprotein diacylglyceryl transferase (280 aa).

Helical transmembrane passes span 19–39 (LSVR…YFVA), 56–76 (IIFY…VIFQ), and 90–110 (IWHG…AGVI). Arg138 contributes to the a 1,2-diacyl-sn-glycero-3-phospho-(1'-sn-glycerol) binding site. Transmembrane regions (helical) follow at residues 204–224 (LGET…FIEG) and 236–256 (IRVA…LIVY).

The protein belongs to the Lgt family.

It is found in the cell membrane. The enzyme catalyses L-cysteinyl-[prolipoprotein] + a 1,2-diacyl-sn-glycero-3-phospho-(1'-sn-glycerol) = an S-1,2-diacyl-sn-glyceryl-L-cysteinyl-[prolipoprotein] + sn-glycerol 1-phosphate + H(+). It functions in the pathway protein modification; lipoprotein biosynthesis (diacylglyceryl transfer). In terms of biological role, catalyzes the transfer of the diacylglyceryl group from phosphatidylglycerol to the sulfhydryl group of the N-terminal cysteine of a prolipoprotein, the first step in the formation of mature lipoproteins. The protein is Phosphatidylglycerol--prolipoprotein diacylglyceryl transferase of Staphylococcus aureus (strain MRSA252).